The following is a 94-amino-acid chain: Selenoprotein K (94 aa).

Residues 20 to 42 traverse the membrane as a helical segment; the sequence is LSLITDFFWGIAEFVVLFFKTLL. The segment at 48-94 is disordered; sequence KRRSYGNSSDSRYDDGRGPPGNPPRRMGRINHLRGPSPPPMAGGUGR. Sec92 is a non-standard amino acid (selenocysteine).

It belongs to the selenoprotein K family. In terms of assembly, interacts with DERL1, DERL2, DERL3 and SELENOS. The SELENOK-SELENOS complex interacts with VCP. Interacts with ZDHHC6. Post-translationally, cleaved by CAPN2/m-calpain in resting macrophages but not in activated macrophages. Macrophage activation up-regulates expression of the calpain inhibitor CAST/calpastatin, resulting in inhibition of CAPN2 activity. In terms of processing, truncated SELENOK proteins produced by failed UGA/Sec decoding are ubiquitinated by the CRL2(KLHDC2) complex, which recognizes the diglycine (Gly-Gly) at the C-terminus of truncated SELENOK proteins. As to expression, highly expressed in heart.

Its subcellular location is the endoplasmic reticulum membrane. It localises to the cell membrane. In terms of biological role, required for Ca(2+) flux in immune cells and plays a role in T-cell proliferation and in T-cell and neutrophil migration. Involved in endoplasmic reticulum-associated degradation (ERAD) of soluble glycosylated proteins. Required for palmitoylation and cell surface expression of CD36 and involved in macrophage uptake of low-density lipoprotein and in foam cell formation. Together with ZDHHC6, required for palmitoylation of ITPR1 in immune cells, leading to regulate ITPR1 stability and function. Plays a role in protection of cells from ER stress-induced apoptosis. Protects cells from oxidative stress when overexpressed in cardiomyocytes. This is Selenoprotein K from Homo sapiens (Human).